The primary structure comprises 352 residues: Tropomodulin-3 (352 aa).

Ser-25 is modified (phosphoserine).

Belongs to the tropomodulin family. Binds to the N-terminus of tropomyosin and to actin. Interacts with FLII. Ubiquitous.

Its subcellular location is the cytoplasm. It localises to the cytoskeleton. Blocks the elongation and depolymerization of the actin filaments at the pointed end. The Tmod/TM complex contributes to the formation of the short actin protofilament, which in turn defines the geometry of the membrane skeleton. The polypeptide is Tropomodulin-3 (Tmod3) (Mus musculus (Mouse)).